The sequence spans 232 residues: uncharacterized protein (232 aa).

The N-terminal stretch at Met-1–Ala-32 is a signal peptide.

This is an uncharacterized protein from Mycobacterium bovis (strain ATCC BAA-935 / AF2122/97).